The chain runs to 358 residues: E3 ubiquitin-protein ligase SIS3 (358 aa).

Positions 1–27 (MAMRGVDFKWYDGFFLSMLATSVIIVA) are cleaved as a signal peptide. Helical transmembrane passes span 40–60 (LHIW…FMFV), 85–105 (VVVL…WTVI), and 125–145 (GFLI…FICV). Residues 235-276 (CLICLEEFHIGHEVRGLPCAHNFHVECIDQWLRLNVKCPRCR) form an RING-type; atypical zinc finger. Residues 336 to 358 (TALETAENGGVPPVLTDLSPSRR) form a disordered region.

As to expression, expressed in roots, stems, leaves, flowers and siliques.

It is found in the membrane. It carries out the reaction S-ubiquitinyl-[E2 ubiquitin-conjugating enzyme]-L-cysteine + [acceptor protein]-L-lysine = [E2 ubiquitin-conjugating enzyme]-L-cysteine + N(6)-ubiquitinyl-[acceptor protein]-L-lysine.. It participates in protein modification; protein ubiquitination. Functionally, E3 ubiquitin protein ligase that acts as a positive regulator of sugar signaling during early seedling development. Possesses E3 ligase activity in vitro. This is E3 ubiquitin-protein ligase SIS3 (SIS3) from Arabidopsis thaliana (Mouse-ear cress).